The sequence spans 365 residues: Forkhead box protein E4 (365 aa).

The segment covering 1 to 13 (MDSPDSVRVKCES) has biased composition (basic and acidic residues). The tract at residues 1 to 46 (MDSPDSVRVKCESKGSCSPEEGLNNGLPEEHNQASGGRRRKRPVQR) is disordered. Positions 48–142 (KPPYSYIALI…DNGSFLRRRK (95 aa)) form a DNA-binding region, fork-head.

In terms of tissue distribution, first expressed at the end of gastrulation (stage 13) in the anterior ectodermal placode. During intermediate neural plate stages (stages 14-16), expression expands to the presumptive nasal ectoderm (PNE) and the presumptive lens ectoderm (PLE). By stages 18-21, expression begins to deplete in the PNE, while intensifying in the PLE so that by late neural stages (stages 22), expression is restricted to the PLE. Throughout tailbud stages (stage 23-31), expression is maintained in the lens placode and lens vesicle. In the maturing lens (stage 32-onwards), expression is restricted to the anterior lens epithelium, where it remains during the tadpole stage. In tadpoles there is additional expression in the ventral midline of the pharynx. Expression continues in the adult eye.

It localises to the nucleus. Its function is as follows. Probable transcription factor. Mediates lens formation in the embryo by promoting the proliferation of the specified lens ectoderm and suppressing its terminal differentiation. This chain is Forkhead box protein E4, found in Xenopus laevis (African clawed frog).